Here is a 737-residue protein sequence, read N- to C-terminus: Acetylcholinesterase (737 aa).

Positions Met-1–Val-38 are cleaved as a signal peptide. The tract at residues His-141–Val-168 is disordered. A glycan (N-linked (GlcNAc...) asparagine) is linked at Asn-220. The cysteines at positions 228 and 255 are disulfide-linked. Ser-360 acts as the Acyl-ester intermediate in catalysis. A disulfide bond links Cys-414 and Cys-427. Active-site charge relay system residues include Glu-486 and His-600. An intrachain disulfide couples Cys-562 to Cys-683. Residue Asn-670 is glycosylated (N-linked (GlcNAc...) asparagine).

Belongs to the type-B carboxylesterase/lipase family.

It is found in the synapse. It carries out the reaction acetylcholine + H2O = choline + acetate + H(+). Functionally, rapidly hydrolyzes choline released into the synapse. The chain is Acetylcholinesterase (Ace) from Anopheles gambiae (African malaria mosquito).